The sequence spans 151 residues: 3-dehydroquinate dehydratase (151 aa).

Catalysis depends on Tyr24, which acts as the Proton acceptor. 3 residues coordinate substrate: Asn76, His82, and Asp89. His102 serves as the catalytic Proton donor. Residues Val103–Ser104 and Arg113 each bind substrate.

It belongs to the type-II 3-dehydroquinase family. In terms of assembly, homododecamer.

The enzyme catalyses 3-dehydroquinate = 3-dehydroshikimate + H2O. Its pathway is metabolic intermediate biosynthesis; chorismate biosynthesis; chorismate from D-erythrose 4-phosphate and phosphoenolpyruvate: step 3/7. Functionally, catalyzes a trans-dehydration via an enolate intermediate. This chain is 3-dehydroquinate dehydratase, found in Rhodopseudomonas palustris (strain BisA53).